Consider the following 393-residue polypeptide: tRNA(Met) cytidine acetate ligase (393 aa).

ATP-binding residues include Gly81, Asn142, and Arg167.

It belongs to the TmcAL family.

The protein resides in the cytoplasm. The enzyme catalyses cytidine(34) in elongator tRNA(Met) + acetate + ATP = N(4)-acetylcytidine(34) in elongator tRNA(Met) + AMP + diphosphate. Catalyzes the formation of N(4)-acetylcytidine (ac(4)C) at the wobble position of elongator tRNA(Met), using acetate and ATP as substrates. First activates an acetate ion to form acetyladenylate (Ac-AMP) and then transfers the acetyl group to tRNA to form ac(4)C34. The polypeptide is tRNA(Met) cytidine acetate ligase (Bacillus cytotoxicus (strain DSM 22905 / CIP 110041 / 391-98 / NVH 391-98)).